Here is a 412-residue protein sequence, read N- to C-terminus: 23S rRNA (uracil(747)-C(5))-methyltransferase (412 aa).

Residues Cys63, Cys69, Cys72, and Cys139 each contribute to the [4Fe-4S] cluster site. Positions 255, 281, 302, and 343 each coordinate S-adenosyl-L-methionine. The active-site Nucleophile is the Cys369.

Belongs to the class I-like SAM-binding methyltransferase superfamily. RNA M5U methyltransferase family.

The enzyme catalyses uridine(747) in 23S rRNA + S-adenosyl-L-methionine = 5-methyluridine(747) in 23S rRNA + S-adenosyl-L-homocysteine + H(+). Catalyzes the formation of 5-methyl-uridine at position equivalent to 747 (m5U747) in 23S rRNA. The chain is 23S rRNA (uracil(747)-C(5))-methyltransferase from Pyrococcus horikoshii (strain ATCC 700860 / DSM 12428 / JCM 9974 / NBRC 100139 / OT-3).